The primary structure comprises 260 residues: Acyl-[acyl-carrier-protein]--UDP-N-acetylglucosamine O-acyltransferase (260 aa).

This sequence belongs to the transferase hexapeptide repeat family. LpxA subfamily. As to quaternary structure, homotrimer.

The protein resides in the cytoplasm. The enzyme catalyses a (3R)-hydroxyacyl-[ACP] + UDP-N-acetyl-alpha-D-glucosamine = a UDP-3-O-[(3R)-3-hydroxyacyl]-N-acetyl-alpha-D-glucosamine + holo-[ACP]. Its pathway is glycolipid biosynthesis; lipid IV(A) biosynthesis; lipid IV(A) from (3R)-3-hydroxytetradecanoyl-[acyl-carrier-protein] and UDP-N-acetyl-alpha-D-glucosamine: step 1/6. Its function is as follows. Involved in the biosynthesis of lipid A, a phosphorylated glycolipid that anchors the lipopolysaccharide to the outer membrane of the cell. The chain is Acyl-[acyl-carrier-protein]--UDP-N-acetylglucosamine O-acyltransferase from Aliarcobacter butzleri (strain RM4018) (Arcobacter butzleri).